The primary structure comprises 84 residues: Large ribosomal subunit protein bL27 (84 aa).

A disordered region spans residues 1–21 (MAHKKGVGSSRNGRDSDGQRL).

Belongs to the bacterial ribosomal protein bL27 family.

The polypeptide is Large ribosomal subunit protein bL27 (Trichlorobacter lovleyi (strain ATCC BAA-1151 / DSM 17278 / SZ) (Geobacter lovleyi)).